Consider the following 374-residue polypeptide: Pectinesterase (374 aa).

An N-terminal signal peptide occupies residues 1–31; sequence MVKLLNSTRELSINALSMLNSFGDMVAQATG. Asn58 and Asn124 each carry an N-linked (GlcNAc...) asparagine glycan. The substrate site is built by Thr133 and Gln163. Residue Asp186 is the Proton donor of the active site. The cysteines at positions 200 and 220 are disulfide-linked. Asp207 (nucleophile) is an active-site residue. Residue Asn230 is glycosylated (N-linked (GlcNAc...) asparagine). Substrate is bound by residues Arg275 and Trp277. Asn303 carries an N-linked (GlcNAc...) asparagine glycan.

Belongs to the pectinesterase family. As to expression, pollen, and at much lower levels in pistils and petals.

Its subcellular location is the secreted. It is found in the cell wall. It carries out the reaction [(1-&gt;4)-alpha-D-galacturonosyl methyl ester](n) + n H2O = [(1-&gt;4)-alpha-D-galacturonosyl](n) + n methanol + n H(+). Its pathway is glycan metabolism; pectin degradation; 2-dehydro-3-deoxy-D-gluconate from pectin: step 1/5. May play a role in pollen germination and/or tube growth. The polypeptide is Pectinesterase (PPE1) (Petunia integrifolia (Violet-flowered petunia)).